Reading from the N-terminus, the 574-residue chain is Proline--tRNA ligase (574 aa).

The protein belongs to the class-II aminoacyl-tRNA synthetase family. ProS type 1 subfamily. In terms of assembly, homodimer.

The protein localises to the cytoplasm. The enzyme catalyses tRNA(Pro) + L-proline + ATP = L-prolyl-tRNA(Pro) + AMP + diphosphate. Catalyzes the attachment of proline to tRNA(Pro) in a two-step reaction: proline is first activated by ATP to form Pro-AMP and then transferred to the acceptor end of tRNA(Pro). As ProRS can inadvertently accommodate and process non-cognate amino acids such as alanine and cysteine, to avoid such errors it has two additional distinct editing activities against alanine. One activity is designated as 'pretransfer' editing and involves the tRNA(Pro)-independent hydrolysis of activated Ala-AMP. The other activity is designated 'posttransfer' editing and involves deacylation of mischarged Ala-tRNA(Pro). The misacylated Cys-tRNA(Pro) is not edited by ProRS. In Pseudoalteromonas translucida (strain TAC 125), this protein is Proline--tRNA ligase.